The chain runs to 178 residues: Large ribosomal subunit protein uL6 (178 aa).

It belongs to the universal ribosomal protein uL6 family. As to quaternary structure, part of the 50S ribosomal subunit.

Functionally, this protein binds to the 23S rRNA, and is important in its secondary structure. It is located near the subunit interface in the base of the L7/L12 stalk, and near the tRNA binding site of the peptidyltransferase center. This is Large ribosomal subunit protein uL6 from Campylobacter jejuni subsp. jejuni serotype O:2 (strain ATCC 700819 / NCTC 11168).